A 309-amino-acid chain; its full sequence is Taste receptor type 2 member 113 (309 aa).

Over 1 to 8 (MVAVLQST) the chain is Extracellular. The helical transmembrane segment at 9–29 (FAIIFSMEFIVGTLGNGFIIL) threads the bilayer. Topologically, residues 30–55 (MTCIDWVRRRKISLVDQILTALAITR) are cytoplasmic. The helical transmembrane segment at 56–76 (ITLILLVFIDWWVSVLFPALH) threads the bilayer. Topologically, residues 77 to 101 (ETGKILRMYFISWTVINHCNLWLTA) are extracellular. The helical transmembrane segment at 102-122 (SLSIIYFLKIASFSSIIFLYL) threads the bilayer. Residues 123-127 (KFRVK) lie on the Cytoplasmic side of the membrane. A helical membrane pass occupies residues 128–148 (NVVFVTLLVSLFFLFINTAIV). The Extracellular portion of the chain corresponds to 149 to 185 (NVYFDVCFDGVQRNVSQVSRLYNHEQICKFLSFTNPM). The N-linked (GlcNAc...) asparagine glycan is linked to Asn-162. A helical membrane pass occupies residues 186 to 206 (FAFIPFVTSMATFFLLIFSLW). Over 207-229 (RHLKNMKHNAEGCRDVSTIVHIR) the chain is Cytoplasmic. Residues 230–250 (ALQTIIVSVVLYSTFFLSFFV) form a helical membrane-spanning segment. The Extracellular portion of the chain corresponds to 251 to 262 (KVWSSGSPERYL). The helical transmembrane segment at 263–283 (IFLFVWALGNAVLPAHTFVLI) threads the bilayer. Topologically, residues 284–309 (WGNCRLRWASLSLMLWLRYRFKNIDV) are cytoplasmic.

This sequence belongs to the G-protein coupled receptor T2R family.

It is found in the membrane. Functionally, putative taste receptor which may play a role in the perception of bitterness. The chain is Taste receptor type 2 member 113 from Rattus norvegicus (Rat).